The following is a 544-amino-acid chain: uncharacterized protein (544 aa).

This is an uncharacterized protein from Acanthamoeba polyphaga mimivirus (APMV).